We begin with the raw amino-acid sequence, 317 residues long: Beta-ketoacyl-[acyl-carrier-protein] synthase III (317 aa).

Catalysis depends on residues C112 and H244. The tract at residues 245–249 is ACP-binding; it reads QANLR. The active site involves N274.

Belongs to the thiolase-like superfamily. FabH family. As to quaternary structure, homodimer.

Its subcellular location is the cytoplasm. It carries out the reaction malonyl-[ACP] + acetyl-CoA + H(+) = 3-oxobutanoyl-[ACP] + CO2 + CoA. It functions in the pathway lipid metabolism; fatty acid biosynthesis. Its function is as follows. Catalyzes the condensation reaction of fatty acid synthesis by the addition to an acyl acceptor of two carbons from malonyl-ACP. Catalyzes the first condensation reaction which initiates fatty acid synthesis and may therefore play a role in governing the total rate of fatty acid production. Possesses both acetoacetyl-ACP synthase and acetyl transacylase activities. Its substrate specificity determines the biosynthesis of branched-chain and/or straight-chain of fatty acids. This Pasteurella multocida (strain Pm70) protein is Beta-ketoacyl-[acyl-carrier-protein] synthase III.